A 600-amino-acid chain; its full sequence is DNA ligase (600 aa).

Position 259 (D259) interacts with ATP. The N6-AMP-lysine intermediate role is filled by K261. Positions 266, 281, 311, 351, 428, and 434 each coordinate ATP.

The protein belongs to the ATP-dependent DNA ligase family. The cofactor is Mg(2+).

The catalysed reaction is ATP + (deoxyribonucleotide)n-3'-hydroxyl + 5'-phospho-(deoxyribonucleotide)m = (deoxyribonucleotide)n+m + AMP + diphosphate.. Its function is as follows. DNA ligase that seals nicks in double-stranded DNA during DNA replication, DNA recombination and DNA repair. This is DNA ligase from Acidianus ambivalens (Desulfurolobus ambivalens).